The following is a 315-amino-acid chain: Ornithine carbamoyltransferase, anabolic (315 aa).

Carbamoyl phosphate is bound by residues 57-60 (STRT), Q84, R108, and 135-138 (HPCQ). Residues N166, D230, and 234 to 235 (SM) contribute to the L-ornithine site. Residues 270-271 (CL) and R298 contribute to the carbamoyl phosphate site.

Belongs to the aspartate/ornithine carbamoyltransferase superfamily. OTCase family. As to quaternary structure, homododecamer (tetramer of trimers).

Its subcellular location is the cytoplasm. The enzyme catalyses carbamoyl phosphate + L-ornithine = L-citrulline + phosphate + H(+). The protein operates within amino-acid biosynthesis; L-arginine biosynthesis; L-arginine from L-ornithine and carbamoyl phosphate: step 1/3. Its activity is regulated as follows. Inhibited by the bisubstrate delta-N-phosphonoacetyl-L-ornithine (PALO). Reversibly catalyzes the transfer of the carbamoyl group from carbamoyl phosphate (CP) to the N(epsilon) atom of ornithine (ORN) to produce L-citrulline, which is a substrate for argininosuccinate synthetase, the enzyme involved in the final step in arginine biosynthesis. The protein is Ornithine carbamoyltransferase, anabolic of Pyrococcus furiosus (strain ATCC 43587 / DSM 3638 / JCM 8422 / Vc1).